The chain runs to 217 residues: Phosphatidylserine decarboxylase proenzyme (217 aa).

Residue S182 is the Schiff-base intermediate with substrate; via pyruvic acid of the active site. S182 bears the Pyruvic acid (Ser); by autocatalysis mark.

The protein belongs to the phosphatidylserine decarboxylase family. PSD-A subfamily. In terms of assembly, heterodimer of a large membrane-associated beta subunit and a small pyruvoyl-containing alpha subunit. Pyruvate serves as cofactor. Post-translationally, is synthesized initially as an inactive proenzyme. Formation of the active enzyme involves a self-maturation process in which the active site pyruvoyl group is generated from an internal serine residue via an autocatalytic post-translational modification. Two non-identical subunits are generated from the proenzyme in this reaction, and the pyruvate is formed at the N-terminus of the alpha chain, which is derived from the carboxyl end of the proenzyme. The post-translation cleavage follows an unusual pathway, termed non-hydrolytic serinolysis, in which the side chain hydroxyl group of the serine supplies its oxygen atom to form the C-terminus of the beta chain, while the remainder of the serine residue undergoes an oxidative deamination to produce ammonia and the pyruvoyl prosthetic group on the alpha chain.

It is found in the cell membrane. The enzyme catalyses a 1,2-diacyl-sn-glycero-3-phospho-L-serine + H(+) = a 1,2-diacyl-sn-glycero-3-phosphoethanolamine + CO2. The protein operates within phospholipid metabolism; phosphatidylethanolamine biosynthesis; phosphatidylethanolamine from CDP-diacylglycerol: step 2/2. Functionally, catalyzes the formation of phosphatidylethanolamine (PtdEtn) from phosphatidylserine (PtdSer). The polypeptide is Phosphatidylserine decarboxylase proenzyme (Nitratidesulfovibrio vulgaris (strain ATCC 29579 / DSM 644 / CCUG 34227 / NCIMB 8303 / VKM B-1760 / Hildenborough) (Desulfovibrio vulgaris)).